The sequence spans 362 residues: D-alanine--D-alanine ligase (362 aa).

The ATP-grasp domain maps to 134 to 345 (KILAQRAGVP…YPDLITRLIR (212 aa)). 170–225 (GQLGTSNLFVKPSNQGSSVGITHVTDDSNYAEALAEAFKYDDKVLVEEGIVGTEVE) contributes to the ATP binding site. Positions 298, 312, and 314 each coordinate Mg(2+).

The protein belongs to the D-alanine--D-alanine ligase family. Mg(2+) serves as cofactor. The cofactor is Mn(2+).

Its subcellular location is the cytoplasm. The enzyme catalyses 2 D-alanine + ATP = D-alanyl-D-alanine + ADP + phosphate + H(+). It functions in the pathway cell wall biogenesis; peptidoglycan biosynthesis. In terms of biological role, cell wall formation. The polypeptide is D-alanine--D-alanine ligase (Lactobacillus delbrueckii subsp. bulgaricus (strain ATCC 11842 / DSM 20081 / BCRC 10696 / JCM 1002 / NBRC 13953 / NCIMB 11778 / NCTC 12712 / WDCM 00102 / Lb 14)).